The sequence spans 191 residues: Holliday junction branch migration complex subunit RuvA (191 aa).

The interval 1–64 is domain I; sequence MIGTLSGIIE…DNVPQLYGFT (64 aa). The tract at residues 65–145 is domain II; that stretch reads DTEEQNCLKM…FNIMDKRGPS (81 aa). The segment at 146-149 is flexible linker; the sequence is VEDS. Residues 149–191 form a domain III region; that stretch reads SDALSALLSLGYEKTRVLNALEKVGVSHNLSDTVRFALKELSK.

The protein belongs to the RuvA family. In terms of assembly, homotetramer. Forms an RuvA(8)-RuvB(12)-Holliday junction (HJ) complex. HJ DNA is sandwiched between 2 RuvA tetramers; dsDNA enters through RuvA and exits via RuvB. An RuvB hexamer assembles on each DNA strand where it exits the tetramer. Each RuvB hexamer is contacted by two RuvA subunits (via domain III) on 2 adjacent RuvB subunits; this complex drives branch migration. In the full resolvosome a probable DNA-RuvA(4)-RuvB(12)-RuvC(2) complex forms which resolves the HJ.

It localises to the cytoplasm. Its function is as follows. The RuvA-RuvB-RuvC complex processes Holliday junction (HJ) DNA during genetic recombination and DNA repair, while the RuvA-RuvB complex plays an important role in the rescue of blocked DNA replication forks via replication fork reversal (RFR). RuvA specifically binds to HJ cruciform DNA, conferring on it an open structure. The RuvB hexamer acts as an ATP-dependent pump, pulling dsDNA into and through the RuvAB complex. HJ branch migration allows RuvC to scan DNA until it finds its consensus sequence, where it cleaves and resolves the cruciform DNA. The protein is Holliday junction branch migration complex subunit RuvA of Anaplasma phagocytophilum (strain HZ).